Consider the following 218-residue polypeptide: NAD(P)H-quinone oxidoreductase subunit I (218 aa).

4Fe-4S ferredoxin-type domains follow at residues 55–84 and 95–124; these read GRIH…VDWV and RNYS…MTEE. [4Fe-4S] cluster is bound by residues Cys64, Cys67, Cys70, Cys74, Cys104, Cys107, Cys110, and Cys114. The tract at residues 192–218 is disordered; it reads LSLQQDSLQGDEGESLQDAPDQDQPKG.

It belongs to the complex I 23 kDa subunit family. In terms of assembly, NDH-1 is composed of at least 11 different subunits. Requires [4Fe-4S] cluster as cofactor.

It localises to the cellular thylakoid membrane. It catalyses the reaction a plastoquinone + NADH + (n+1) H(+)(in) = a plastoquinol + NAD(+) + n H(+)(out). It carries out the reaction a plastoquinone + NADPH + (n+1) H(+)(in) = a plastoquinol + NADP(+) + n H(+)(out). NDH-1 shuttles electrons from an unknown electron donor, via FMN and iron-sulfur (Fe-S) centers, to quinones in the respiratory and/or the photosynthetic chain. The immediate electron acceptor for the enzyme in this species is believed to be plastoquinone. Couples the redox reaction to proton translocation, and thus conserves the redox energy in a proton gradient. The chain is NAD(P)H-quinone oxidoreductase subunit I from Prochlorococcus marinus (strain MIT 9303).